The following is a 261-amino-acid chain: MYFHILILNHTLMKKKSYSTYNLTIWQHIWTIILLFISISCIKQYNFSFQSFNRGEYSNFTTFDSFNKKQVCNLISFDNALLKILLKNKICINTIEKQPIYKQIQICPDFCRLIFTSHSYNPIGIINNVSDLSIIGFVDLYGNKWEEGSAFIAHKYFLENQKLPNIIGINNMNSYKLAQMCFVLKNNKSTHSFVIDLRKEKNIILINNLGKVNIGNDFASLIKKLIFLKSFTSICKEGDDILSKIDINNLSRPIVQYSSYL.

Its subcellular location is the plastid. The protein resides in the chloroplast. This is an uncharacterized protein from Mesostigma viride (Green alga).